The primary structure comprises 339 residues: Ketol-acid reductoisomerase (NADP(+)) (339 aa).

Positions 1–182 (MRVYYDRDAD…GGGRSGVIET (182 aa)) constitute a KARI N-terminal Rossmann domain. Residues 24–27 (YGSQ), arginine 48, serine 51, threonine 53, and 83–86 (DEHQ) contribute to the NADP(+) site. Residue histidine 108 is part of the active site. Glycine 134 is an NADP(+) binding site. In terms of domain architecture, KARI C-terminal knotted spans 183–328 (TFKEECETDL…AELRAMMPWI (146 aa)). 4 residues coordinate Mg(2+): aspartate 191, glutamate 195, glutamate 227, and glutamate 231. Serine 252 contributes to the substrate binding site.

It belongs to the ketol-acid reductoisomerase family. Requires Mg(2+) as cofactor.

It carries out the reaction (2R)-2,3-dihydroxy-3-methylbutanoate + NADP(+) = (2S)-2-acetolactate + NADPH + H(+). The catalysed reaction is (2R,3R)-2,3-dihydroxy-3-methylpentanoate + NADP(+) = (S)-2-ethyl-2-hydroxy-3-oxobutanoate + NADPH + H(+). Its pathway is amino-acid biosynthesis; L-isoleucine biosynthesis; L-isoleucine from 2-oxobutanoate: step 2/4. The protein operates within amino-acid biosynthesis; L-valine biosynthesis; L-valine from pyruvate: step 2/4. Involved in the biosynthesis of branched-chain amino acids (BCAA). Catalyzes an alkyl-migration followed by a ketol-acid reduction of (S)-2-acetolactate (S2AL) to yield (R)-2,3-dihydroxy-isovalerate. In the isomerase reaction, S2AL is rearranged via a Mg-dependent methyl migration to produce 3-hydroxy-3-methyl-2-ketobutyrate (HMKB). In the reductase reaction, this 2-ketoacid undergoes a metal-dependent reduction by NADPH to yield (R)-2,3-dihydroxy-isovalerate. The protein is Ketol-acid reductoisomerase (NADP(+)) of Rhizorhabdus wittichii (strain DSM 6014 / CCUG 31198 / JCM 15750 / NBRC 105917 / EY 4224 / RW1) (Sphingomonas wittichii).